The sequence spans 331 residues: Biotin synthase (331 aa).

Positions 52–281 constitute a Radical SAM core domain; sequence FFQNKVKLNM…TKEIRVSGGR (230 aa). Positions 70, 74, and 77 each coordinate [4Fe-4S] cluster. Residues C114, C146, C206, and R276 each coordinate [2Fe-2S] cluster.

The protein belongs to the radical SAM superfamily. Biotin synthase family. In terms of assembly, homodimer. Requires [4Fe-4S] cluster as cofactor. It depends on [2Fe-2S] cluster as a cofactor.

It catalyses the reaction (4R,5S)-dethiobiotin + (sulfur carrier)-SH + 2 reduced [2Fe-2S]-[ferredoxin] + 2 S-adenosyl-L-methionine = (sulfur carrier)-H + biotin + 2 5'-deoxyadenosine + 2 L-methionine + 2 oxidized [2Fe-2S]-[ferredoxin]. It participates in cofactor biosynthesis; biotin biosynthesis; biotin from 7,8-diaminononanoate: step 2/2. Functionally, catalyzes the conversion of dethiobiotin (DTB) to biotin by the insertion of a sulfur atom into dethiobiotin via a radical-based mechanism. This Bacillus pumilus (strain SAFR-032) protein is Biotin synthase.